Consider the following 351-residue polypeptide: Delta(7)-sterol 5(6)-desaturase (351 aa).

A run of 3 helical transmembrane segments spans residues 88–108 (LSLF…VASF), 136–156 (GLGA…LELH), and 173–193 (VRLA…IYLL). The Fatty acid hydroxylase domain occupies 180-305 (LFFILFTDFG…FTTLWDRLGG (126 aa)). A Histidine box-1 motif is present at residues 194-198 (HRWLH). The short motif at 207-211 (HKKHH) is the Histidine box-2 element. A helical transmembrane segment spans residues 237-257 (HLFPMLFPLHKVSYLVLFTFV). The short motif at 282–286 (HTVHH) is the Histidine box-3 element.

Belongs to the sterol desaturase family. Requires Fe cation as cofactor.

It is found in the endoplasmic reticulum membrane. It carries out the reaction a Delta(7)-sterol + 2 Fe(II)-[cytochrome b5] + O2 + 2 H(+) = a Delta(5),Delta(7)-sterol + 2 Fe(III)-[cytochrome b5] + 2 H2O. Its pathway is steroid metabolism; ergosterol biosynthesis; ergosterol from zymosterol: step 3/5. Catalyzes the introduction of a C-5 double bond in the B ring of ergosterol. May contribute to the regulation of ergosterol biosynthesis. This chain is Delta(7)-sterol 5(6)-desaturase (ERG3), found in Eremothecium gossypii (strain ATCC 10895 / CBS 109.51 / FGSC 9923 / NRRL Y-1056) (Yeast).